We begin with the raw amino-acid sequence, 265 residues long: Mlc titration factor A (265 aa).

His-111, His-148, His-152, and Glu-211 together coordinate Zn(2+).

The protein belongs to the MtfA family. As to quaternary structure, interacts with Mlc with high affinity. Zn(2+) serves as cofactor.

Its subcellular location is the cytoplasm. With respect to regulation, proteolytic activity is stimulated by interaction with Mlc. Addition of the chelators EDTA or phenanthroline significantly reduces the peptidase activity, whereas the addition of other protease inhibitors has much less effect. In terms of biological role, involved in the modulation of the activity of the glucose-phosphotransferase system (glucose-PTS). Interacts with the transcriptional repressor Mlc, preventing its interaction with DNA and leading to the modulation of expression of genes regulated by Mlc, including ptsG, which encodes the PTS system glucose-specific EIICB component. Shows zinc-dependent metallopeptidase activity. In vitro, can cleave several artificial substrates. The greatest activity and specificity is observed for L-alanine fused to 4-nitroanilide (L-alanine-pNA). Shows significantly lower activity towards L-arginine-pNA, L-proline-pNA, hippuryl-L-phenylalanine and hippuryl-L-arginine, and cannot use FTC-casein. Mlc does not appear to be a biologically relevant peptidase substrate. Biologically relevant targets may have a function in growth transition under changing environmental conditions. The sequence is that of Mlc titration factor A from Escherichia coli (strain K12).